A 436-amino-acid chain; its full sequence is MSQTTASITTAQWQQKRDQFVSKGVSNGNRSLAVKGEGAELYDLDGRRFIDFAGAIGTLNVGHSHPKVVEAVKRQAEELIHPGFNVMMYPTYIELAEKLCGIAPGSHEKKAIFLNSGAEAVENAVKIARKYTKRQGVVSFTRGFHGRTNMTMSMTSKVKPYKFGFGPFAPEVYQAPFPYYYQKPAGMSDESYDDMVIQAFNDFFIASVAPETVACVVMEPVQGEGGFIIPSKRFVQHVASFCKEHGIVFVADEIQTGFARTGTYFAIEHFDVVPDLITVSKSLAAGLPLSGVIGRAEMLDAAAPGELGGTYAGSPLGCAAALAVLDIIEEEGLNERSEEIGKIIEDKAYEWKQEFPFIGDIRRLGAMAAIEIVKDPDTREPDKTKAAAIAAYANQNGLLLLTAGINGNIIRFLTPLVISDSLLNEGLSILEAGLRA.

Lys281 carries the post-translational modification N6-(pyridoxal phosphate)lysine.

Belongs to the class-III pyridoxal-phosphate-dependent aminotransferase family. Requires pyridoxal 5'-phosphate as cofactor.

It carries out the reaction 4-aminobutanoate + 2-oxoglutarate = succinate semialdehyde + L-glutamate. The enzyme catalyses (S)-3-amino-2-methylpropanoate + 2-oxoglutarate = 2-methyl-3-oxopropanoate + L-glutamate. It functions in the pathway amino-acid degradation; 4-aminobutanoate degradation. This is Probable 4-aminobutyrate aminotransferase (gabT) from Bacillus subtilis (strain 168).